A 229-amino-acid chain; its full sequence is Sec-independent protein translocase protein TatB (229 aa).

The chain crosses the membrane as a helical span at residues 1 to 21 (MFDIGFSELLLFGVIALIVLG). A disordered region spans residues 90–131 (EFEHSQSQNLKTSDKAASPANQANNDSAIQNNNEPATFSYAY). Positions 108-131 (PANQANNDSAIQNNNEPATFSYAY) are enriched in polar residues.

It belongs to the TatB family. As to quaternary structure, the Tat system comprises two distinct complexes: a TatABC complex, containing multiple copies of TatA, TatB and TatC subunits, and a separate TatA complex, containing only TatA subunits. Substrates initially bind to the TatABC complex, which probably triggers association of the separate TatA complex to form the active translocon.

Its subcellular location is the cell inner membrane. In terms of biological role, part of the twin-arginine translocation (Tat) system that transports large folded proteins containing a characteristic twin-arginine motif in their signal peptide across membranes. Together with TatC, TatB is part of a receptor directly interacting with Tat signal peptides. TatB may form an oligomeric binding site that transiently accommodates folded Tat precursor proteins before their translocation. The protein is Sec-independent protein translocase protein TatB of Psychrobacter arcticus (strain DSM 17307 / VKM B-2377 / 273-4).